The primary structure comprises 74 residues: Large ribosomal subunit protein uL14c (74 aa).

The protein belongs to the universal ribosomal protein uL14 family. In terms of assembly, part of the 50S ribosomal subunit.

It is found in the plastid. It localises to the chloroplast. Functionally, binds to 23S rRNA. This chain is Large ribosomal subunit protein uL14c (rpl14), found in Oenothera ammophila (Evening primerose).